The sequence spans 326 residues: Triacylglycerol lipase 2 (326 aa).

Positions 142–146 match the (A/G)XSXG lipase motif motif; it reads AHSMG.

Interacts with MIA40; forms mixed disulfide intermediates with MIA40.

It is found in the mitochondrion. The protein resides in the mitochondrion intermembrane space. The catalysed reaction is a triacylglycerol + H2O = a diacylglycerol + a fatty acid + H(+). It catalyses the reaction 1,2,3-tri-(9Z-octadecenoyl)-glycerol + H2O = di-(9Z)-octadecenoylglycerol + (9Z)-octadecenoate + H(+). The enzyme catalyses 1,2,3-tributanoylglycerol + H2O = dibutanoylglycerol + butanoate + H(+). It carries out the reaction 1,2,3-trioctanoylglycerol + H2O = dioctanoylglycerol + octanoate + H(+). The catalysed reaction is di-(9Z)-octadecenoylglycerol + H2O = (9Z-octadecenoyl)-glycerol + (9Z)-octadecenoate + H(+). It catalyses the reaction dioctanoylglycerol + H2O = octanoylglycerol + octanoate + H(+). Its function is as follows. Mitochondrial triacylglycerol (TAG) lipase with activity toward long-chain diacylglycerols (DAGs) and triacylglycerols (TAGs). Involved in mitochondrial lipid metabolism. This is Triacylglycerol lipase 2 (TGL2) from Saccharomyces cerevisiae (strain ATCC 204508 / S288c) (Baker's yeast).